The sequence spans 329 residues: Beta-ketoacyl-[acyl-carrier-protein] synthase III (329 aa).

Residues Cys-113 and His-255 contribute to the active site. The ACP-binding stretch occupies residues 256–260 (QANQR). The active site involves Asn-285.

The protein belongs to the thiolase-like superfamily. FabH family. In terms of assembly, homodimer.

It localises to the cytoplasm. The enzyme catalyses malonyl-[ACP] + acetyl-CoA + H(+) = 3-oxobutanoyl-[ACP] + CO2 + CoA. It participates in lipid metabolism; fatty acid biosynthesis. In terms of biological role, catalyzes the condensation reaction of fatty acid synthesis by the addition to an acyl acceptor of two carbons from malonyl-ACP. Catalyzes the first condensation reaction which initiates fatty acid synthesis and may therefore play a role in governing the total rate of fatty acid production. Possesses both acetoacetyl-ACP synthase and acetyl transacylase activities. Its substrate specificity determines the biosynthesis of branched-chain and/or straight-chain of fatty acids. This is Beta-ketoacyl-[acyl-carrier-protein] synthase III from Chlorobium phaeobacteroides (strain DSM 266 / SMG 266 / 2430).